We begin with the raw amino-acid sequence, 335 residues long: Holliday junction branch migration complex subunit RuvB (335 aa).

The interval 4-183 (ADNLNVTSII…FGIVQRLEFY (180 aa)) is large ATPase domain (RuvB-L). Residues Arg23, Gly64, Lys67, Thr68, Thr69, 130–132 (EDY), Arg173, Tyr183, and Arg220 contribute to the ATP site. Thr68 lines the Mg(2+) pocket. The tract at residues 184–254 (PTKDLQNIIS…VAMNALNMLN (71 aa)) is small ATPAse domain (RuvB-S). Residues 257-335 (TAGFNFMDRQ…HFSLKQSRDI (79 aa)) are head domain (RuvB-H). DNA-binding residues include Arg293, Arg312, and Arg317.

The protein belongs to the RuvB family. Homohexamer. Forms an RuvA(8)-RuvB(12)-Holliday junction (HJ) complex. HJ DNA is sandwiched between 2 RuvA tetramers; dsDNA enters through RuvA and exits via RuvB. An RuvB hexamer assembles on each DNA strand where it exits the tetramer. Each RuvB hexamer is contacted by two RuvA subunits (via domain III) on 2 adjacent RuvB subunits; this complex drives branch migration. In the full resolvosome a probable DNA-RuvA(4)-RuvB(12)-RuvC(2) complex forms which resolves the HJ.

The protein localises to the cytoplasm. It catalyses the reaction ATP + H2O = ADP + phosphate + H(+). In terms of biological role, the RuvA-RuvB-RuvC complex processes Holliday junction (HJ) DNA during genetic recombination and DNA repair, while the RuvA-RuvB complex plays an important role in the rescue of blocked DNA replication forks via replication fork reversal (RFR). RuvA specifically binds to HJ cruciform DNA, conferring on it an open structure. The RuvB hexamer acts as an ATP-dependent pump, pulling dsDNA into and through the RuvAB complex. RuvB forms 2 homohexamers on either side of HJ DNA bound by 1 or 2 RuvA tetramers; 4 subunits per hexamer contact DNA at a time. Coordinated motions by a converter formed by DNA-disengaged RuvB subunits stimulates ATP hydrolysis and nucleotide exchange. Immobilization of the converter enables RuvB to convert the ATP-contained energy into a lever motion, pulling 2 nucleotides of DNA out of the RuvA tetramer per ATP hydrolyzed, thus driving DNA branch migration. The RuvB motors rotate together with the DNA substrate, which together with the progressing nucleotide cycle form the mechanistic basis for DNA recombination by continuous HJ branch migration. Branch migration allows RuvC to scan DNA until it finds its consensus sequence, where it cleaves and resolves cruciform DNA. This Baumannia cicadellinicola subsp. Homalodisca coagulata protein is Holliday junction branch migration complex subunit RuvB.